The chain runs to 206 residues: Delta and osm-11 homolog protein 1 (206 aa).

The protein is Delta and osm-11 homolog protein 1 (dos-1) of Caenorhabditis elegans.